The following is a 37-amino-acid chain: Large ribosomal subunit protein bL36 (37 aa).

This sequence belongs to the bacterial ribosomal protein bL36 family.

This Vesicomyosocius okutanii subsp. Calyptogena okutanii (strain HA) protein is Large ribosomal subunit protein bL36.